The following is a 485-amino-acid chain: NADH-quinone oxidoreductase subunit N (485 aa).

Helical transmembrane passes span 8 to 28 (LIAL…MLSI), 35 to 55 (FLNA…LWFV), 71 to 91 (GFAM…CTFA), 105 to 125 (FYLL…ANHL), 127 to 147 (TLFL…GYAF), 159 to 179 (YTIL…LVYA), 203 to 223 (LLAG…LVPF), 235 to 255 (PAPV…GVVM), 271 to 291 (VVLG…ALSQ), 297 to 317 (LLGY…IALQ), 326 to 346 (VGVY…VVSL), 373 to 393 (AAVM…LGFI), 408 to 430 (WWLV…RVAV), and 455 to 475 (IVVL…QPLI).

The protein belongs to the complex I subunit 2 family. As to quaternary structure, NDH-1 is composed of 13 different subunits. Subunits NuoA, H, J, K, L, M, N constitute the membrane sector of the complex.

It is found in the cell inner membrane. It carries out the reaction a quinone + NADH + 5 H(+)(in) = a quinol + NAD(+) + 4 H(+)(out). Functionally, NDH-1 shuttles electrons from NADH, via FMN and iron-sulfur (Fe-S) centers, to quinones in the respiratory chain. The immediate electron acceptor for the enzyme in this species is believed to be ubiquinone. Couples the redox reaction to proton translocation (for every two electrons transferred, four hydrogen ions are translocated across the cytoplasmic membrane), and thus conserves the redox energy in a proton gradient. The protein is NADH-quinone oxidoreductase subunit N of Salmonella paratyphi A (strain ATCC 9150 / SARB42).